The following is a 368-amino-acid chain: Protein-glutamate methylesterase/protein-glutamine glutaminase (368 aa).

Positions 9 to 126 constitute a Response regulatory domain; that stretch reads KVLVVDDSAF…SINMKELKDE (118 aa). Asp60 bears the 4-aspartylphosphate mark. The region spanning 161 to 354 is the CheB-type methylesterase domain; sequence SVPARIAVAI…ETVVKAVEII (194 aa). Active-site residues include Ser173, His200, and Asp296.

The protein belongs to the CheB family. In terms of processing, phosphorylated by CheA. Phosphorylation of the N-terminal regulatory domain activates the methylesterase activity.

Its subcellular location is the cytoplasm. It carries out the reaction [protein]-L-glutamate 5-O-methyl ester + H2O = L-glutamyl-[protein] + methanol + H(+). The catalysed reaction is L-glutaminyl-[protein] + H2O = L-glutamyl-[protein] + NH4(+). Its function is as follows. Involved in chemotaxis. Part of a chemotaxis signal transduction system that modulates chemotaxis in response to various stimuli. Catalyzes the demethylation of specific methylglutamate residues introduced into the chemoreceptors (methyl-accepting chemotaxis proteins or MCP) by CheR. Also mediates the irreversible deamidation of specific glutamine residues to glutamic acid. The polypeptide is Protein-glutamate methylesterase/protein-glutamine glutaminase (Pyrococcus horikoshii (strain ATCC 700860 / DSM 12428 / JCM 9974 / NBRC 100139 / OT-3)).